The primary structure comprises 397 residues: Acetate kinase (397 aa).

Residue Asn-7 coordinates Mg(2+). Position 14 (Lys-14) interacts with ATP. Substrate is bound at residue Arg-90. The Proton donor/acceptor role is filled by Asp-147. ATP-binding positions include 207 to 211, 282 to 284, and 330 to 334; these read HLGNG, DFR, and GLGEN. A Mg(2+)-binding site is contributed by Glu-383.

Belongs to the acetokinase family. Homodimer. Mg(2+) is required as a cofactor. It depends on Mn(2+) as a cofactor.

Its subcellular location is the cytoplasm. It catalyses the reaction acetate + ATP = acetyl phosphate + ADP. The protein operates within metabolic intermediate biosynthesis; acetyl-CoA biosynthesis; acetyl-CoA from acetate: step 1/2. Functionally, catalyzes the formation of acetyl phosphate from acetate and ATP. Can also catalyze the reverse reaction. This is Acetate kinase from Clostridium botulinum (strain Loch Maree / Type A3).